A 466-amino-acid polypeptide reads, in one-letter code: Na(+)/H(+) antiporter NhaA (466 aa).

Helical transmembrane passes span valine 32–alanine 52, leucine 74–isoleucine 94, alanine 111–leucine 131, glycine 142–glycine 162, phenylalanine 172–phenylalanine 192, aspartate 195–leucine 215, glycine 221–isoleucine 241, glycine 280–leucine 300, leucine 310–leucine 330, valine 348–leucine 368, and glutamate 379–leucine 399.

The protein belongs to the NhaA Na(+)/H(+) (TC 2.A.33) antiporter family.

It is found in the cell membrane. The catalysed reaction is Na(+)(in) + 2 H(+)(out) = Na(+)(out) + 2 H(+)(in). In terms of biological role, na(+)/H(+) antiporter that extrudes sodium in exchange for external protons. In Streptomyces avermitilis (strain ATCC 31267 / DSM 46492 / JCM 5070 / NBRC 14893 / NCIMB 12804 / NRRL 8165 / MA-4680), this protein is Na(+)/H(+) antiporter NhaA.